The primary structure comprises 900 residues: Zinc finger protein 62 homolog (900 aa).

The disordered stretch occupies residues 1-97; sequence MSHLKTSTED…EASEKSLHLS (97 aa). Lys-5 is covalently cross-linked (Glycyl lysine isopeptide (Lys-Gly) (interchain with G-Cter in SUMO2)). Acidic residues predominate over residues 9-18; sequence EDEEPTEEYE. Positions 47 to 73 are enriched in basic and acidic residues; that stretch reads SKVENQQKKPVENRMKEDKSSIREAIS. Glycyl lysine isopeptide (Lys-Gly) (interchain with G-Cter in SUMO2) cross-links involve residues Lys-48, Lys-62, Lys-65, Lys-82, and Lys-92. Basic and acidic residues predominate over residues 83–94; sequence TEQEGEASEKSL. 13 C2H2-type zinc fingers span residues 225–247, 253–275, 281–303, 309–331, 337–359, 365–387, 393–415, 421–443, 449–471, 477–499, 505–527, 533–555, and 561–583; these read CKCD…KRIH, YECG…KRIH, YECD…KRIH, YECD…KSIH, YKCD…KVIH, YKCD…KSIH, HECK…RTIH, YVCD…RRLH, YKCD…KGIH, YKCS…KRIH, FGCD…KRIH, and YKCE…KSVH. Lys-587 is covalently cross-linked (Glycyl lysine isopeptide (Lys-Gly) (interchain with G-Cter in SUMO2)). 10 consecutive C2H2-type zinc fingers follow at residues 589–611, 617–639, 645–667, 673–695, 701–723, 729–751, 757–779, 785–807, 813–834, and 840–862; these read FKCD…KKVH, YKCD…RRVH, YECD…KRIH, YECD…KSTH, HTCD…KRVH, FKCV…KRIH, YVCD…KRIH, YECD…KSVH, YNCE…KRIH, and YRCN…KRTH. Residue Lys-748 forms a Glycyl lysine isopeptide (Lys-Gly) (interchain with G-Cter in SUMO2) linkage. Lys-882 participates in a covalent cross-link: Glycyl lysine isopeptide (Lys-Gly) (interchain with G-Cter in SUMO2).

It belongs to the krueppel C2H2-type zinc-finger protein family.

Its subcellular location is the nucleus. May play a role in differentiating skeletal muscle. This Homo sapiens (Human) protein is Zinc finger protein 62 homolog (ZFP62).